The sequence spans 610 residues: Dihydroxy-acid dehydratase (610 aa).

Position 81 (Asp81) interacts with Mg(2+). [2Fe-2S] cluster is bound at residue Cys122. 2 residues coordinate Mg(2+): Asp123 and Lys124. An N6-carboxylysine modification is found at Lys124. A [2Fe-2S] cluster-binding site is contributed by Cys196. Glu492 contributes to the Mg(2+) binding site. Residue Ser518 is the Proton acceptor of the active site.

The protein belongs to the IlvD/Edd family. As to quaternary structure, homodimer. Requires [2Fe-2S] cluster as cofactor. Mg(2+) serves as cofactor.

It carries out the reaction (2R)-2,3-dihydroxy-3-methylbutanoate = 3-methyl-2-oxobutanoate + H2O. The catalysed reaction is (2R,3R)-2,3-dihydroxy-3-methylpentanoate = (S)-3-methyl-2-oxopentanoate + H2O. The protein operates within amino-acid biosynthesis; L-isoleucine biosynthesis; L-isoleucine from 2-oxobutanoate: step 3/4. It participates in amino-acid biosynthesis; L-valine biosynthesis; L-valine from pyruvate: step 3/4. Its function is as follows. Functions in the biosynthesis of branched-chain amino acids. Catalyzes the dehydration of (2R,3R)-2,3-dihydroxy-3-methylpentanoate (2,3-dihydroxy-3-methylvalerate) into 2-oxo-3-methylpentanoate (2-oxo-3-methylvalerate) and of (2R)-2,3-dihydroxy-3-methylbutanoate (2,3-dihydroxyisovalerate) into 2-oxo-3-methylbutanoate (2-oxoisovalerate), the penultimate precursor to L-isoleucine and L-valine, respectively. This is Dihydroxy-acid dehydratase from Ruegeria pomeroyi (strain ATCC 700808 / DSM 15171 / DSS-3) (Silicibacter pomeroyi).